The sequence spans 704 residues: Elongation factor G (704 aa).

In terms of domain architecture, tr-type G spans 8-290 (EKYRNIGICA…GVVRYLPAPN (283 aa)). Residues 17–24 (AHVDAGKT), 88–92 (DTPGH), and 142–145 (NKMD) contribute to the GTP site.

Belongs to the TRAFAC class translation factor GTPase superfamily. Classic translation factor GTPase family. EF-G/EF-2 subfamily.

Its subcellular location is the cytoplasm. Its function is as follows. Catalyzes the GTP-dependent ribosomal translocation step during translation elongation. During this step, the ribosome changes from the pre-translocational (PRE) to the post-translocational (POST) state as the newly formed A-site-bound peptidyl-tRNA and P-site-bound deacylated tRNA move to the P and E sites, respectively. Catalyzes the coordinated movement of the two tRNA molecules, the mRNA and conformational changes in the ribosome. This is Elongation factor G from Francisella tularensis subsp. holarctica (strain FTNF002-00 / FTA).